A 485-amino-acid chain; its full sequence is Argininosuccinate lyase (485 aa).

This sequence belongs to the lyase 1 family. Argininosuccinate lyase subfamily.

It localises to the cytoplasm. It catalyses the reaction 2-(N(omega)-L-arginino)succinate = fumarate + L-arginine. The protein operates within amino-acid biosynthesis; L-arginine biosynthesis; L-arginine from L-ornithine and carbamoyl phosphate: step 3/3. This chain is Argininosuccinate lyase, found in Paracidovorax citrulli (strain AAC00-1) (Acidovorax citrulli).